A 348-amino-acid chain; its full sequence is NADH-ubiquinone oxidoreductase chain 2 (348 aa).

The next 10 membrane-spanning stretches (helical) occupy residues 1-21 (MSPY…TITF), 25-45 (SWLM…PLMV), 60-80 (FLTQ…NAWM), 93-115 (LSAP…HFWL), 149-169 (LNTT…GLGG), 177-197 (KVLA…IQYS), 200-220 (LALL…LTLM), 239-259 (IATM…PLTG), 274-294 (NLPA…FFYL), and 326-346 (LAML…MVAI).

This sequence belongs to the complex I subunit 2 family.

The protein localises to the mitochondrion inner membrane. It catalyses the reaction a ubiquinone + NADH + 5 H(+)(in) = a ubiquinol + NAD(+) + 4 H(+)(out). Core subunit of the mitochondrial membrane respiratory chain NADH dehydrogenase (Complex I) that is believed to belong to the minimal assembly required for catalysis. Complex I functions in the transfer of electrons from NADH to the respiratory chain. The immediate electron acceptor for the enzyme is believed to be ubiquinone. This chain is NADH-ubiquinone oxidoreductase chain 2 (MT-ND2), found in Latimeria chalumnae (Coelacanth).